A 451-amino-acid polypeptide reads, in one-letter code: UBP1-associated protein 2B (451 aa).

Positions 1–86 are disordered; that stretch reads MTKKRKLESE…GNEDDDEEEP (86 aa). Basic and acidic residues-rich tracts occupy residues 25–38 and 49–63; these read CEKEDPEIRNVDNQ and DTLKEMHEEEAKGED. Polar residues predominate over residues 67–77; the sequence is AETSSGSGNQG. RRM domains lie at 128-236 and 227-314; these read RKIF…NVSA and RKIY…QHQH. Disordered regions lie at residues 302 to 335 and 423 to 451; these read ANDGPKQVKQHQHNHNSHNQNSRYQRNDNNGYGA and GGYQTQQPGQGGAGRGQHGAGYGGPYMGR. Residues 431 to 451 show a composition bias toward gly residues; it reads GQGGAGRGQHGAGYGGPYMGR.

As to expression, expressed in shoot meristem and flowers.

It localises to the nucleus. Functionally, heterogeneous nuclear ribonucleoprotein (hnRNP)-like protein that acts as a component of a complex regulating the turnover of mRNAs in the nucleus. Binds with high affinity to RNA molecules that contain U-rich sequences in 3'-UTRs. May function in complex with UBP1 and contribute to the stabilization of mRNAs in the nucleus. The protein is UBP1-associated protein 2B (UBA2B) of Arabidopsis thaliana (Mouse-ear cress).